A 196-amino-acid polypeptide reads, in one-letter code: Xanthine phosphoribosyltransferase (196 aa).

Xanthine contacts are provided by L26 and N33. 134–138 is a binding site for 5-phospho-alpha-D-ribose 1-diphosphate; sequence ASGEA. K162 contacts xanthine.

Belongs to the purine/pyrimidine phosphoribosyltransferase family. Xpt subfamily. In terms of assembly, homodimer.

It localises to the cytoplasm. The enzyme catalyses XMP + diphosphate = xanthine + 5-phospho-alpha-D-ribose 1-diphosphate. Its pathway is purine metabolism; XMP biosynthesis via salvage pathway; XMP from xanthine: step 1/1. Converts the preformed base xanthine, a product of nucleic acid breakdown, to xanthosine 5'-monophosphate (XMP), so it can be reused for RNA or DNA synthesis. This chain is Xanthine phosphoribosyltransferase, found in Moorella thermoacetica (strain ATCC 39073 / JCM 9320).